The primary structure comprises 365 residues: Peptide chain release factor 2 (365 aa).

At glutamine 252 the chain carries N5-methylglutamine.

It belongs to the prokaryotic/mitochondrial release factor family. In terms of processing, methylated by PrmC. Methylation increases the termination efficiency of RF2.

It is found in the cytoplasm. In terms of biological role, peptide chain release factor 2 directs the termination of translation in response to the peptide chain termination codons UGA and UAA. The sequence is that of Peptide chain release factor 2 from Shewanella baltica (strain OS223).